The sequence spans 156 residues: Small ribosomal subunit protein uS7 (156 aa).

The protein belongs to the universal ribosomal protein uS7 family. As to quaternary structure, part of the 30S ribosomal subunit. Contacts proteins S9 and S11.

In terms of biological role, one of the primary rRNA binding proteins, it binds directly to 16S rRNA where it nucleates assembly of the head domain of the 30S subunit. Is located at the subunit interface close to the decoding center, probably blocks exit of the E-site tRNA. The polypeptide is Small ribosomal subunit protein uS7 (Beutenbergia cavernae (strain ATCC BAA-8 / DSM 12333 / CCUG 43141 / JCM 11478 / NBRC 16432 / NCIMB 13614 / HKI 0122)).